The primary structure comprises 426 residues: Bone morphogenetic protein 7 (426 aa).

A signal peptide spans 1-22 (MNALTVKRRLPVLLFLFHISLS). Positions 23-282 (SISSNTILEN…TSDIHLRSVR (260 aa)) are excised as a propeptide. Residues Asn177, Asn307, and Asn367 are each glycosylated (N-linked (GlcNAc...) asparagine). Intrachain disulfides connect Cys325–Cys391, Cys354–Cys423, and Cys358–Cys425.

Belongs to the TGF-beta family. As to quaternary structure, homodimer; disulfide-linked. Interacts with twsg1.

It is found in the secreted. Its function is as follows. Growth factor of the TGF-beta superfamily that plays important role in various biological processes, including embryogenesis, hematopoiesis, neurogenesis and skeletal morphogenesis. Initiates the canonical BMP signaling cascade by associating with type I receptor ACVR1 and type II receptor ACVR2A. Once all three components are bound together in a complex at the cell surface, ACVR2A phosphorylates and activates ACVR1. In turn, ACVR1 propagates signal by phosphorylating SMAD1/5/8 that travel to the nucleus and act as activators and repressors of transcription of target genes. The polypeptide is Bone morphogenetic protein 7 (bmp7) (Xenopus laevis (African clawed frog)).